Here is an 892-residue protein sequence, read N- to C-terminus: Putative ubiquitin carboxyl-terminal hydrolase 11 (892 aa).

The region spanning 17-132 (YTPEEERRIV…GGPPVPRKLI (116 aa)) is the DUSP domain. Residues 69–89 (EPSEVTRPGPIDNHDIIDSES) form a disordered region. One can recognise a USP domain in the interval 301-880 (GGLQNLGNTC…AAYVLFYQRV (580 aa)). C310 (nucleophile) is an active-site residue. Residues 636 to 660 (NSGNENGHVPDESSRSILSRDTETE) form a disordered region. Residues 643 to 657 (HVPDESSRSILSRDT) show a composition bias toward basic and acidic residues. H838 acts as the Proton acceptor in catalysis.

Belongs to the peptidase C19 family.

It carries out the reaction Thiol-dependent hydrolysis of ester, thioester, amide, peptide and isopeptide bonds formed by the C-terminal Gly of ubiquitin (a 76-residue protein attached to proteins as an intracellular targeting signal).. Recognizes and hydrolyzes the peptide bond at the C-terminal Gly of ubiquitin. Involved in the processing of poly-ubiquitin precursors as well as that of ubiquitinated proteins. The chain is Putative ubiquitin carboxyl-terminal hydrolase 11 (UBP11) from Arabidopsis thaliana (Mouse-ear cress).